Reading from the N-terminus, the 196-residue chain is Translation machinery-associated protein 22 (196 aa).

Residues 97–168 enclose the SUI1 domain; sequence VIVKREARTK…EVVAYIHSLL (72 aa).

This sequence belongs to the DENR family. In terms of assembly, interacts with the 40S ribosomal subunit.

The protein resides in the cytoplasm. The sequence is that of Translation machinery-associated protein 22 (TMA22) from Candida glabrata (strain ATCC 2001 / BCRC 20586 / JCM 3761 / NBRC 0622 / NRRL Y-65 / CBS 138) (Yeast).